A 55-amino-acid polypeptide reads, in one-letter code: Large ribosomal subunit protein bL33 (55 aa).

It belongs to the bacterial ribosomal protein bL33 family.

The sequence is that of Large ribosomal subunit protein bL33 from Photorhabdus laumondii subsp. laumondii (strain DSM 15139 / CIP 105565 / TT01) (Photorhabdus luminescens subsp. laumondii).